We begin with the raw amino-acid sequence, 60 residues long: Cytotoxin 10 (60 aa).

Cystine bridges form between C3-C21, C14-C38, C42-C53, and C54-C59.

Belongs to the three-finger toxin family. Short-chain subfamily. Type IA cytotoxin sub-subfamily. As to quaternary structure, monomer in solution; Homodimer and oligomer in the presence of negatively charged lipids forming a pore with a size ranging between 20 and 30 Angstroms. In terms of tissue distribution, expressed by the venom gland.

The protein resides in the secreted. It is found in the target cell membrane. Its function is as follows. Shows cytolytic activity on many different cells by forming pore in lipid membranes. In vivo, increases heart rate or kills the animal by cardiac arrest. In addition, it binds to heparin with high affinity, interacts with Kv channel-interacting protein 1 (KCNIP1) in a calcium-independent manner, and binds to integrin alpha-V/beta-3 (ITGAV/ITGB3) with moderate affinity. This chain is Cytotoxin 10, found in Naja annulifera (Banded Egyptian cobra).